We begin with the raw amino-acid sequence, 969 residues long: Probable Rho-type GTPase-activating protein 3 (969 aa).

2 LIM zinc-binding domains span residues 17–81 and 76–135; these read TVCF…CTAC and HTCT…RHPS. 3 disordered regions span residues 170–223, 348–459, and 613–646; these read IEIM…ADSL, ATSP…VEEL, and TSSK…SPNL. Residues 193–202 show a composition bias toward polar residues; that stretch reads ETPTNMSQAE. 2 stretches are compositionally biased toward low complexity: residues 212–223 and 350–361; these read DSNLASNSADSL and SPFRPFSPSYRS. Composition is skewed to polar residues over residues 369-392 and 418-432; these read TRSP…SFAQ and LSET…SLGS. Positions 450-459 are enriched in basic and acidic residues; sequence SERDSDVEEL. Residues 613-623 show a composition bias toward low complexity; the sequence is TSSKNTTSSIN. Polar residues predominate over residues 624–637; the sequence is PLTAVSSNSGQSSG. A Phorbol-ester/DAG-type zinc finger spans residues 697–744; it reads DHVFHVNAIFKPSRCYICSESVWGSELRCFHCSISCHSRCLKRLFAES. Residues 780–966 form the Rho-GAP domain; sequence RSLENQLKIE…FMLDNVDKIL (187 aa).

Interacts with dil1.

It is found in the cell tip. Its function is as follows. GTPase-activating protein for Rho-type proteins. This chain is Probable Rho-type GTPase-activating protein 3 (rga3), found in Schizosaccharomyces pombe (strain 972 / ATCC 24843) (Fission yeast).